The chain runs to 445 residues: Phosphoglucosamine mutase (445 aa).

Catalysis depends on S102, which acts as the Phosphoserine intermediate. S102, D241, D243, and D245 together coordinate Mg(2+). S102 bears the Phosphoserine mark.

This sequence belongs to the phosphohexose mutase family. The cofactor is Mg(2+). Activated by phosphorylation.

The catalysed reaction is alpha-D-glucosamine 1-phosphate = D-glucosamine 6-phosphate. Catalyzes the conversion of glucosamine-6-phosphate to glucosamine-1-phosphate. This chain is Phosphoglucosamine mutase, found in Escherichia coli O81 (strain ED1a).